A 1018-amino-acid chain; its full sequence is Isoleucine--tRNA ligase (1018 aa).

The short motif at 43 to 53 (PYTTGRIHLGT) is the 'HIGH' region element. The 'KMSKS' region motif lies at 586–590 (KMSKS). Residue Lys-589 coordinates ATP.

The protein belongs to the class-I aminoacyl-tRNA synthetase family. IleS type 2 subfamily. As to quaternary structure, monomer. Requires Zn(2+) as cofactor.

The protein resides in the cytoplasm. It catalyses the reaction tRNA(Ile) + L-isoleucine + ATP = L-isoleucyl-tRNA(Ile) + AMP + diphosphate. Functionally, catalyzes the attachment of isoleucine to tRNA(Ile). As IleRS can inadvertently accommodate and process structurally similar amino acids such as valine, to avoid such errors it has two additional distinct tRNA(Ile)-dependent editing activities. One activity is designated as 'pretransfer' editing and involves the hydrolysis of activated Val-AMP. The other activity is designated 'posttransfer' editing and involves deacylation of mischarged Val-tRNA(Ile). The chain is Isoleucine--tRNA ligase from Archaeoglobus fulgidus (strain ATCC 49558 / DSM 4304 / JCM 9628 / NBRC 100126 / VC-16).